The primary structure comprises 339 residues: GTP 3',8-cyclase (339 aa).

One can recognise a Radical SAM core domain in the interval 13 to 249 (RYGRPLRDLR…GEVAQRHAFA (237 aa)). A GTP-binding site is contributed by arginine 22. Cysteine 29 and cysteine 33 together coordinate [4Fe-4S] cluster. Position 35 (tyrosine 35) interacts with S-adenosyl-L-methionine. Position 36 (cysteine 36) interacts with [4Fe-4S] cluster. Arginine 75 contributes to the GTP binding site. Glycine 79 contributes to the S-adenosyl-L-methionine binding site. Residue threonine 106 coordinates GTP. An S-adenosyl-L-methionine-binding site is contributed by serine 130. Lysine 168 is a GTP binding site. Methionine 202 lines the S-adenosyl-L-methionine pocket. Cysteine 266 and cysteine 269 together coordinate [4Fe-4S] cluster. Residue 271–273 (RAR) participates in GTP binding. Cysteine 283 is a binding site for [4Fe-4S] cluster.

It belongs to the radical SAM superfamily. MoaA family. As to quaternary structure, monomer and homodimer. It depends on [4Fe-4S] cluster as a cofactor.

It catalyses the reaction GTP + AH2 + S-adenosyl-L-methionine = (8S)-3',8-cyclo-7,8-dihydroguanosine 5'-triphosphate + 5'-deoxyadenosine + L-methionine + A + H(+). Its pathway is cofactor biosynthesis; molybdopterin biosynthesis. Its function is as follows. Catalyzes the cyclization of GTP to (8S)-3',8-cyclo-7,8-dihydroguanosine 5'-triphosphate. The sequence is that of GTP 3',8-cyclase from Xanthomonas campestris pv. campestris (strain B100).